Here is a 254-residue protein sequence, read N- to C-terminus: Ribosomal RNA small subunit methyltransferase J (254 aa).

S-adenosyl-L-methionine is bound by residues 101-102, 117-118, 153-154, and Asp171; these read RD, ER, and SS.

This sequence belongs to the methyltransferase superfamily. RsmJ family.

The protein resides in the cytoplasm. It catalyses the reaction guanosine(1516) in 16S rRNA + S-adenosyl-L-methionine = N(2)-methylguanosine(1516) in 16S rRNA + S-adenosyl-L-homocysteine + H(+). Its function is as follows. Specifically methylates the guanosine in position 1516 of 16S rRNA. The sequence is that of Ribosomal RNA small subunit methyltransferase J from Enterobacter sp. (strain 638).